The chain runs to 150 residues: MADMGRHGMAMAMAPAAAGGAGRRKRYMHMTFYWGKNSEILFTGWPGASGGMYALALAAVFALAVLLEFLGSPRVQESSSLGSRRRRATAAAVHAVRVGLAYLLMLALMSFNVGVLLAAVAGHAAGFLAFRAGLCGGGYKKGELAPAACC.

2 consecutive transmembrane segments (helical) span residues 50-70 (GGMY…LEFL) and 100-120 (LAYL…LAAV).

This sequence belongs to the copper transporter (Ctr) (TC 1.A.56) family. SLC31A subfamily.

It localises to the membrane. In terms of biological role, involved in the transport of copper. This Oryza sativa subsp. japonica (Rice) protein is Copper transporter 3 (COPT3).